The chain runs to 347 residues: MRIEEDLKLGFKDVLIRPKRSTLKSRSDVELERQFTFKHSGQSWSGVPIIAANMDTVGTFSMASALASFDILTAVHKHYSVEEWQAFINNSSADVLKHVMVSTGTSDADFEKTKQILDLNPALNFVCIDVANGYSEHFVQFVAKAREAWPTKTICAGNVVTGEMCEELILSGADIVKVGIGPGSVCTTRVKTGVGYPQLSAVIECADAAHGLGGMIVSDGGCTTPGDVAKAFGGGADFVMLGGMLAGHEESGGRIVEENGEKFMLFYGMSSESAMKRHVGGVAEYRAAEGKTVKLPLRGPVENTARDILGGLRSACTYVGASRLKELTKRTTFIRVQEQENRIFNNL.

Residue 108–131 participates in NADP(+) binding; the sequence is ADFEKTKQILDLNPALNFVCIDVA. 2 residues coordinate K(+): Gly181 and Gly183. Catalysis depends on Cys186, which acts as the Thioimidate intermediate. 216 to 239 provides a ligand contact to NADP(+); sequence IVSDGGCTTPGDVAKAFGGGADFV.

Belongs to the IMPDH/GMPR family. GuaC type 1 subfamily. Homotetramer.

It catalyses the reaction IMP + NH4(+) + NADP(+) = GMP + NADPH + 2 H(+). Functionally, catalyzes the irreversible NADPH-dependent deamination of GMP to IMP. It functions in the conversion of nucleobase, nucleoside and nucleotide derivatives of G to A nucleotides, and in maintaining the intracellular balance of A and G nucleotides. The sequence is that of GMP reductase from Escherichia coli O127:H6 (strain E2348/69 / EPEC).